Reading from the N-terminus, the 712-residue chain is Probable serine/threonine-protein kinase fhkE (712 aa).

Residues 46-100 (ITFGRLKDSTVHYNDKSISGSHCKITRESNDDDGVVIAFIYDNSTNGTFIDNIKV) enclose the FHA domain. One can recognise a Protein kinase domain in the interval 145–411 (YFIGEMLGQG…CNNIIQHPWF (267 aa)). Residues 151-159 (LGQGNFATV) and Lys174 contribute to the ATP site. Catalysis depends on Asp270, which acts as the Proton acceptor. Residues 414 to 442 (NVKLSTLLEEDERLRKKAEAEVEANNNNT) adopt a coiled-coil conformation. Residues 431–695 (AEAEVEANNN…KCQYDPNCYR (265 aa)) form a disordered region. Composition is skewed to low complexity over residues 436–446 (EANNNNTNKSN), 459–481 (GNCSDSNNNNNSGSKSLSSIKSN), 514–571 (NNDN…SNDT), 595–605 (NLQNHLNNNKI), and 616–639 (NNNNNNNNNNNNNNNNNNNNNNNN). Residues 669 to 678 (PQNSSNNNSG) show a composition bias toward polar residues.

Belongs to the protein kinase superfamily. CAMK Ser/Thr protein kinase family. CHK2 subfamily.

It carries out the reaction L-seryl-[protein] + ATP = O-phospho-L-seryl-[protein] + ADP + H(+). It catalyses the reaction L-threonyl-[protein] + ATP = O-phospho-L-threonyl-[protein] + ADP + H(+). The protein is Probable serine/threonine-protein kinase fhkE (fhkE) of Dictyostelium discoideum (Social amoeba).